The following is a 302-amino-acid chain: tRNA pseudouridine synthase B (302 aa).

The active-site Nucleophile is the aspartate 40.

The protein belongs to the pseudouridine synthase TruB family. Type 1 subfamily.

The enzyme catalyses uridine(55) in tRNA = pseudouridine(55) in tRNA. Functionally, responsible for synthesis of pseudouridine from uracil-55 in the psi GC loop of transfer RNAs. This Shouchella clausii (strain KSM-K16) (Alkalihalobacillus clausii) protein is tRNA pseudouridine synthase B.